Consider the following 233-residue polypeptide: Chalcone--flavanone isomerase (233 aa).

Substrate contacts are provided by T47, N113, and S192.

The protein belongs to the chalcone isomerase family.

It carries out the reaction a chalcone = a flavanone.. It functions in the pathway secondary metabolite biosynthesis; flavonoid biosynthesis. In terms of biological role, catalyzes the intramolecular cyclization of bicyclic chalcones into tricyclic (S)-flavanones. Responsible for the isomerization of 4,2',4',6'-tetrahydroxychalcone (also termed chalcone) into naringenin. The polypeptide is Chalcone--flavanone isomerase (CHI) (Oryza sativa subsp. japonica (Rice)).